The following is a 304-amino-acid chain: Aspartate carbamoyltransferase catalytic subunit (304 aa).

Residues arginine 56 and threonine 57 each contribute to the carbamoyl phosphate site. Lysine 85 contributes to the L-aspartate binding site. Carbamoyl phosphate contacts are provided by arginine 106, histidine 134, and glutamine 137. Positions 167 and 226 each coordinate L-aspartate. Carbamoyl phosphate contacts are provided by leucine 265 and proline 266.

This sequence belongs to the aspartate/ornithine carbamoyltransferase superfamily. ATCase family. As to quaternary structure, heterooligomer of catalytic and regulatory chains.

The catalysed reaction is carbamoyl phosphate + L-aspartate = N-carbamoyl-L-aspartate + phosphate + H(+). The protein operates within pyrimidine metabolism; UMP biosynthesis via de novo pathway; (S)-dihydroorotate from bicarbonate: step 2/3. Catalyzes the condensation of carbamoyl phosphate and aspartate to form carbamoyl aspartate and inorganic phosphate, the committed step in the de novo pyrimidine nucleotide biosynthesis pathway. This is Aspartate carbamoyltransferase catalytic subunit from Picrophilus torridus (strain ATCC 700027 / DSM 9790 / JCM 10055 / NBRC 100828 / KAW 2/3).